The chain runs to 228 residues: uncharacterized protein (228 aa).

Residues 196–228 adopt a coiled-coil conformation; sequence VKITELLDKAKISINDLNKTIEKLNETVNKYHG.

This is an uncharacterized protein from Acanthamoeba polyphaga (Amoeba).